A 349-amino-acid polypeptide reads, in one-letter code: Mitomycin biosynthesis 6-O-methyltransferase (349 aa).

Residues Ser167, Gly190, 213-214 (ER), 240-241 (DF), and Lys255 each bind S-adenosyl-L-methionine. Residue His259 is the Proton acceptor of the active site. Residue Asn288 participates in substrate binding.

The protein belongs to the class I-like SAM-binding methyltransferase superfamily. Cation-independent O-methyltransferase family. COMT subfamily. As to quaternary structure, homodimer.

It catalyses the reaction 6-demethylmitomycin A + S-adenosyl-L-methionine = mitomycin A + S-adenosyl-L-homocysteine. The catalysed reaction is 6-demethylmitomycin B + S-adenosyl-L-methionine = mitomycin B + S-adenosyl-L-homocysteine. Completely inhibited by Zn(2+) and Cu(2+). Its function is as follows. Involved in the biosynthesis of the quinone methoxy group present in the mitomycin A and B, which are used as anticancer agents. In vitro, catalyzes the 6-O-methylation of both C9-beta- and C9-alpha-configured 6-hydroxymitomycins via the transfer of the S-methyl group of S-adenosyl-L-methionine (AdoMet) to the 6-demethylmitomycin A and B. It can also use hydroxyquinone as substrate. In Streptomyces lavendulae, this protein is Mitomycin biosynthesis 6-O-methyltransferase.